A 108-amino-acid chain; its full sequence is Peptidyl-prolyl cis-trans isomerase FKBP1B (108 aa).

One can recognise a PPIase FKBP-type domain in the interval G20–E108.

The protein belongs to the FKBP-type PPIase family. FKBP1 subfamily. As to quaternary structure, identified in a complex composed of RYR2, FKBP1B, PKA catalytic subunit, PRKAR2A, AKAP6, and the protein phosphatases PP2A and PP1. Interacts directly with RYR2.

Its subcellular location is the cytoplasm. It localises to the sarcoplasmic reticulum. The enzyme catalyses [protein]-peptidylproline (omega=180) = [protein]-peptidylproline (omega=0). Its activity is regulated as follows. Inhibited by both FK506 and rapamycin. Its function is as follows. Has the potential to contribute to the immunosuppressive and toxic effects of FK506 and rapamycin. PPIases accelerate the folding of proteins. It catalyzes the cis-trans isomerization of proline imidic peptide bonds in oligopeptides. In Mus musculus (Mouse), this protein is Peptidyl-prolyl cis-trans isomerase FKBP1B (Fkbp1b).